A 63-amino-acid polypeptide reads, in one-letter code: Large ribosomal subunit protein bL28 (63 aa).

It belongs to the bacterial ribosomal protein bL28 family.

The chain is Large ribosomal subunit protein bL28 from Clostridium beijerinckii (strain ATCC 51743 / NCIMB 8052) (Clostridium acetobutylicum).